The primary structure comprises 20 residues: XYNLLTIEDIDVKGKRVLVR.

Belongs to the phosphoglycerate kinase family. In terms of assembly, monomer.

The protein localises to the cytoplasm. It catalyses the reaction (2R)-3-phosphoglycerate + ATP = (2R)-3-phospho-glyceroyl phosphate + ADP. The protein operates within carbohydrate degradation; glycolysis; pyruvate from D-glyceraldehyde 3-phosphate: step 2/5. The polypeptide is Putative phosphoglycerate kinase (pgk) (Clostridium pasteurianum).